A 122-amino-acid polypeptide reads, in one-letter code: Acidic phospholipase A2 BpirPLA2-I (122 aa).

7 disulfides stabilise this stretch: Cys-26-Cys-115, Cys-28-Cys-44, Cys-43-Cys-95, Cys-49-Cys-122, Cys-50-Cys-88, Cys-57-Cys-81, and Cys-75-Cys-86. Ca(2+) is bound by residues Tyr-27, Gly-29, and Gly-31. His-47 is a catalytic residue. Asp-48 provides a ligand contact to Ca(2+). The active site involves Asp-89. Positions Ile-105–Glu-117 match the Antiplatelet activity motif.

The protein belongs to the phospholipase A2 family. Group II subfamily. D49 sub-subfamily. The cofactor is Ca(2+). In terms of tissue distribution, expressed by the venom gland.

It is found in the secreted. The catalysed reaction is a 1,2-diacyl-sn-glycero-3-phosphocholine + H2O = a 1-acyl-sn-glycero-3-phosphocholine + a fatty acid + H(+). With respect to regulation, inhibited by EDTA and p-bromophenacyl bromide (BPB). Functionally, snake venom phospholipase A2 (PLA2) that inhibits collagen/ADP-induced platelet aggregation, and induces hypotension in rats (activity abolished in the presence of p-bromophenacyl bromide). PLA2 catalyzes the calcium-dependent hydrolysis of the 2-acyl groups in 3-sn-phosphoglycerides. The sequence is that of Acidic phospholipase A2 BpirPLA2-I from Bothrops pirajai (Piraja's lancehead).